The following is a 614-amino-acid chain: Vitamin B12 transporter BtuB (614 aa).

Positions 1–20 are cleaved as a signal peptide; the sequence is MIKKATLLTAFSVTAFSAWA. Positions 26–33 match the TonB box motif; the sequence is DTLVVTAN. The TBDR plug domain occupies 38-152; sequence PRSAVLAPVT…IGGVVNIITT (115 aa). Cyanocob(III)alamin-binding positions include Ser85, Asn92, and 110–111; that span reads VS. The 460-residue stretch at 155–614 folds into the TBDR beta-barrel domain; it reads NPGTELTAGW…EYTLSGSYTF (460 aa). A run of 3 beta stranded transmembrane segments spans residues 158 to 165, 169 to 178, and 184 to 195; these read TELTAGWG, YQNYDISTQQ, and TRATLIGDYEYT. Positions 199, 211, 213, and 215 each coordinate Ca(2+). The next 2 membrane-spanning stretches (beta stranded) occupy residues 217–227 and 232–248; these read FLSKTLYGALE and DRWS…NRTD. Residues Tyr249 and Asp250 each coordinate Ca(2+). Ala251 contributes to the cyanocob(III)alamin binding site. Residue Asp261 coordinates Ca(2+). Transmembrane regions (beta stranded) follow at residues 263 to 277, 279 to 296, 309 to 325, 328 to 337, 353 to 369, 371 to 381, 385 to 400, 403 to 417, 434 to 443, 449 to 458, 473 to 490, 494 to 509, 517 to 529, and 535 to 550; these read RKLY…LRFN, ERIQ…KDYN, TLDE…NSVV, HGNVGAGVDW, YDQR…QQLG, FTLEAAARSDD, FGRH…WEFI, YRFI…KAPN, KSKQWEGAFE, VSWRISGYRN, YYNE…TANF, PLTH…ARNA, RRSK…QLDW, and DWGV…YDSD. Residue Thr309 coordinates cyanocob(III)alamin. Arg517 is a cyanocob(III)alamin binding site. Tyr551 is a binding site for cyanocob(III)alamin. The next 3 beta stranded transmembrane spans lie at 558–572, 585–596, and 602–614; these read TVKM…LTVA, IANLFDKDYETV, and AGRE…SYTF. Residues 597–614 carry the TonB C-terminal box motif; that stretch reads YGYQTAGREYTLSGSYTF.

This sequence belongs to the TonB-dependent receptor family. BtuB (TC 1.B.14.3.1) subfamily.

The protein resides in the cell outer membrane. Its function is as follows. Involved in the active translocation of vitamin B12 (cyanocobalamin) across the outer membrane to the periplasmic space. It derives its energy for transport by interacting with the trans-periplasmic membrane protein TonB. The protein is Vitamin B12 transporter BtuB of Salmonella choleraesuis (strain SC-B67).